Consider the following 355-residue polypeptide: 3-dehydroquinate synthase (355 aa).

NAD(+) contacts are provided by residues 71–76 (EGEASK), 105–109 (GVVGD), 129–130 (TS), lysine 142, and lysine 151. Zn(2+)-binding residues include glutamate 184, histidine 246, and histidine 263.

It belongs to the sugar phosphate cyclases superfamily. Dehydroquinate synthase family. Co(2+) serves as cofactor. The cofactor is Zn(2+). NAD(+) is required as a cofactor.

It is found in the cytoplasm. The enzyme catalyses 7-phospho-2-dehydro-3-deoxy-D-arabino-heptonate = 3-dehydroquinate + phosphate. Its pathway is metabolic intermediate biosynthesis; chorismate biosynthesis; chorismate from D-erythrose 4-phosphate and phosphoenolpyruvate: step 2/7. Functionally, catalyzes the conversion of 3-deoxy-D-arabino-heptulosonate 7-phosphate (DAHP) to dehydroquinate (DHQ). This is 3-dehydroquinate synthase from Streptococcus thermophilus (strain ATCC BAA-491 / LMD-9).